The sequence spans 880 residues: Alanine--tRNA ligase (880 aa).

4 residues coordinate Zn(2+): His568, His572, Cys670, and His674.

This sequence belongs to the class-II aminoacyl-tRNA synthetase family. Zn(2+) serves as cofactor.

It is found in the cytoplasm. The enzyme catalyses tRNA(Ala) + L-alanine + ATP = L-alanyl-tRNA(Ala) + AMP + diphosphate. Its function is as follows. Catalyzes the attachment of alanine to tRNA(Ala) in a two-step reaction: alanine is first activated by ATP to form Ala-AMP and then transferred to the acceptor end of tRNA(Ala). Also edits incorrectly charged Ser-tRNA(Ala) and Gly-tRNA(Ala) via its editing domain. In Ligilactobacillus salivarius (strain UCC118) (Lactobacillus salivarius), this protein is Alanine--tRNA ligase.